Consider the following 474-residue polypeptide: Nitric oxide reductase subunit B (474 aa).

Residues 19 to 39 traverse the membrane as a helical segment; it reads YFVFALILFVGQVLFGLIMGL. Residue His60 participates in heme b binding. The next 8 helical transmembrane spans lie at 61 to 81, 95 to 115, 145 to 165, 169 to 189, 207 to 227, 243 to 263, 270 to 290, and 308 to 328; these read TNLL…YLIP, IILF…YLFV, IGIV…MLKG, VVST…LFAF, HLWV…FVLI, VIIA…FFWI, LWVG…MVLF, and SLWA…WGFM. His207, His258, and His259 together coordinate Fe cation. Positions 347 and 349 each coordinate heme b. 3 helical membrane-spanning segments follow: residues 348 to 368, 390 to 410, and 433 to 453; these read GHLA…SYAM, FWLM…AGVV, and LAIF…GLVC.

The protein belongs to the heme-copper respiratory oxidase family. In terms of assembly, heterodimer of cytochromes b (large subunit) and c (small subunit).

It localises to the cell membrane. The catalysed reaction is nitrous oxide + 2 Fe(III)-[cytochrome c] + H2O = 2 nitric oxide + 2 Fe(II)-[cytochrome c] + 2 H(+). It participates in nitrogen metabolism; nitrate reduction (denitrification); dinitrogen from nitrate: step 3/4. Component of the anaerobic respiratory chain that transforms nitrate to dinitrogen (denitrification). NorB is the catalytic subunit of the enzyme complex. Shows proton pump activity across the membrane in denitrifying bacterial cells. The mononitrogen reduction is probably coupled to electron transport phosphorylation. This Stutzerimonas stutzeri (Pseudomonas stutzeri) protein is Nitric oxide reductase subunit B (norB).